The following is a 326-amino-acid chain: Cyclin-dependent kinase 6 (326 aa).

An N-acetylmethionine modification is found at Met1. Residues Tyr13 and Tyr24 each carry the phosphotyrosine modification. The Protein kinase domain occupies 13-300 (YECVAEIGEG…AYGALNHPYF (288 aa)). ATP contacts are provided by residues 19-27 (IGEGAYGKV) and Lys43. A phosphothreonine mark is found at Thr49 and Thr70. The active-site Proton acceptor is the Asp145. At Thr177 the chain carries Phosphothreonine. Lys264 bears the N6-acetyllysine mark. Ser319 bears the Phosphoserine mark. Thr325 carries the phosphothreonine modification.

It belongs to the protein kinase superfamily. CMGC Ser/Thr protein kinase family. CDC2/CDKX subfamily. Interaction with D-type G1 cyclins. Cyclin binding promotes enzyme activation by phosphorylation at Thr-177. Binds to RUNX1, CDKN2D, FBXO7 and CDKN2C/p18-INK4c. Forms a cytoplasmic complex with Hsp90/HSP90AB1 and CDC37. FBXO7-binding promotes D-type cyclin binding. In terms of processing, thr-177 phosphorylation and Tyr-24 dephosphorylation promotes kinase activity. As to expression, expressed in subgranular zone (SGZ) of the hippocampal dentate gyrus (DG) and the subventricular zone (SVZ) of the lateral ventricles whose neural precursor cells (NPC) give rise to dentate granule neurons and olfactory bulb (OB) interneurons, respectively. Expressed in the neuroepithelium of the cerebral cortex of the developing brain.

It localises to the cytoplasm. Its subcellular location is the nucleus. The protein localises to the cell projection. It is found in the ruffle. The protein resides in the cytoskeleton. It localises to the microtubule organizing center. Its subcellular location is the centrosome. The enzyme catalyses L-seryl-[protein] + ATP = O-phospho-L-seryl-[protein] + ADP + H(+). It catalyses the reaction L-threonyl-[protein] + ATP = O-phospho-L-threonyl-[protein] + ADP + H(+). Its activity is regulated as follows. Activated by Thr-177 phosphorylation and Tyr-24 dephosphorylation. Rapidly down-regulated prior to cell differentiation (e.g. erythroid and osteoblast). In terms of biological role, serine/threonine-protein kinase involved in the control of the cell cycle and differentiation; promotes G1/S transition. Phosphorylates pRB/RB1 and NPM1. Interacts with D-type G1 cyclins during interphase at G1 to form a pRB/RB1 kinase and controls the entrance into the cell cycle. Involved in initiation and maintenance of cell cycle exit during cell differentiation; prevents cell proliferation and negatively regulates cell differentiation, but is required for the proliferation of specific cell types (e.g. erythroid and hematopoietic cells). Essential for cell proliferation within the dentate gyrus of the hippocampus and the subventricular zone of the lateral ventricles. Required during thymocyte development. Promotes the production of newborn neurons, probably by modulating G1 length. Promotes, at least in astrocytes, changes in patterns of gene expression, changes in the actin cytoskeleton including loss of stress fibers, and enhanced motility during cell differentiation. Prevents myeloid differentiation by interfering with RUNX1 and reducing its transcription transactivation activity, but promotes proliferation of normal myeloid progenitors. Delays senescence. Promotes the proliferation of beta-cells in pancreatic islets of Langerhans. May play a role in the centrosome organization during the cell cycle phases. This Mus musculus (Mouse) protein is Cyclin-dependent kinase 6 (Cdk6).